The chain runs to 407 residues: Shaggy-related protein kinase GSK1 (407 aa).

Pro residues predominate over residues 1–19; the sequence is MEAPPGPEPMELDAPPPPA. Positions 1 to 21 are disordered; the sequence is MEAPPGPEPMELDAPPPPAAV. In terms of domain architecture, Protein kinase spans 68-352; sequence YMAERVVGTG…ALDACAHSFF (285 aa). Residues 74 to 82 and K97 each bind ATP; that span reads VGTGSFGIV. Residue D193 is the Proton acceptor of the active site.

The protein belongs to the protein kinase superfamily. CMGC Ser/Thr protein kinase family. GSK-3 subfamily. In terms of assembly, interacts with LIC. Highly expressed in the entire young panicles, spikelets, awns, vascular bundles of palea and lemma, stigma and rachilla. Expressed in root tips, root hairs, lamina joint in the collar region, vascular bundles of coleoptiles.

The catalysed reaction is L-seryl-[protein] + ATP = O-phospho-L-seryl-[protein] + ADP + H(+). It carries out the reaction L-threonyl-[protein] + ATP = O-phospho-L-threonyl-[protein] + ADP + H(+). In terms of biological role, probable serine-threonine kinase that may act as a negative regulator of brassinosteroid (BR) signaling during flower development. May have physiological roles in stress signal-transduction pathways. Phosphorylates LIC in response to BR perception. This Oryza sativa subsp. japonica (Rice) protein is Shaggy-related protein kinase GSK1.